A 238-amino-acid chain; its full sequence is Leucyl/phenylalanyl-tRNA--protein transferase (238 aa).

This sequence belongs to the L/F-transferase family.

The protein resides in the cytoplasm. The catalysed reaction is N-terminal L-lysyl-[protein] + L-leucyl-tRNA(Leu) = N-terminal L-leucyl-L-lysyl-[protein] + tRNA(Leu) + H(+). It carries out the reaction N-terminal L-arginyl-[protein] + L-leucyl-tRNA(Leu) = N-terminal L-leucyl-L-arginyl-[protein] + tRNA(Leu) + H(+). The enzyme catalyses L-phenylalanyl-tRNA(Phe) + an N-terminal L-alpha-aminoacyl-[protein] = an N-terminal L-phenylalanyl-L-alpha-aminoacyl-[protein] + tRNA(Phe). Its function is as follows. Functions in the N-end rule pathway of protein degradation where it conjugates Leu, Phe and, less efficiently, Met from aminoacyl-tRNAs to the N-termini of proteins containing an N-terminal arginine or lysine. The protein is Leucyl/phenylalanyl-tRNA--protein transferase of Psychromonas ingrahamii (strain DSM 17664 / CCUG 51855 / 37).